The chain runs to 208 residues: Large ribosomal subunit protein uL3 (208 aa).

Positions 116–148 (GFQGVIKRHGQSRGPMAHGSRYHRRPGSMGPVA) are disordered.

The protein belongs to the universal ribosomal protein uL3 family. In terms of assembly, part of the 50S ribosomal subunit. Forms a cluster with proteins L14 and L19.

One of the primary rRNA binding proteins, it binds directly near the 3'-end of the 23S rRNA, where it nucleates assembly of the 50S subunit. The chain is Large ribosomal subunit protein uL3 from Streptococcus pneumoniae (strain Hungary19A-6).